The primary structure comprises 481 residues: Phosphoglucosamine mutase (481 aa).

Catalysis depends on Ser-128, which acts as the Phosphoserine intermediate. The Mg(2+) site is built by Ser-128, Asp-269, Asp-271, and Asp-273. Phosphoserine is present on Ser-128.

Belongs to the phosphohexose mutase family. It depends on Mg(2+) as a cofactor. Post-translationally, activated by phosphorylation.

The enzyme catalyses alpha-D-glucosamine 1-phosphate = D-glucosamine 6-phosphate. Its function is as follows. Catalyzes the conversion of glucosamine-6-phosphate to glucosamine-1-phosphate. This Synechocystis sp. (strain ATCC 27184 / PCC 6803 / Kazusa) protein is Phosphoglucosamine mutase.